The chain runs to 334 residues: Geminin coiled-coil domain-containing protein 1 (334 aa).

Positions 82–119 (SQLYRNKQLQDTLVQKEEELARLHEENNHLRQYLNSAL) form a coiled coil. A disordered region spans residues 143–167 (FRKGKRKSKEQRYSPAEIPHPKNAK).

It belongs to the GEMC1 family. Post-translationally, highly phosphorylated by CDK2; stimulates initiation of DNA replication.

The protein localises to the nucleus. Its function is as follows. Regulator of DNA replication. Promotes initiation of chromosomal DNA replication by mediating TOPBP1- and CDK2-dependent recruitment of CDC45L onto replication origins. The protein is Geminin coiled-coil domain-containing protein 1 (GMNC) of Homo sapiens (Human).